The primary structure comprises 332 residues: Malate dehydrogenase (332 aa).

15–21 (GAAGHIG) is an NAD(+) binding site. Residues R96 and R102 each contribute to the substrate site. NAD(+) contacts are provided by residues N109 and 133–135 (VGN). Substrate contacts are provided by N135 and R166. The active-site Proton acceptor is the H191.

This sequence belongs to the LDH/MDH superfamily. MDH type 2 family.

It catalyses the reaction (S)-malate + NAD(+) = oxaloacetate + NADH + H(+). Its function is as follows. Catalyzes the reversible oxidation of malate to oxaloacetate. The polypeptide is Malate dehydrogenase (Mycolicibacterium vanbaalenii (strain DSM 7251 / JCM 13017 / BCRC 16820 / KCTC 9966 / NRRL B-24157 / PYR-1) (Mycobacterium vanbaalenii)).